Reading from the N-terminus, the 414-residue chain is tRNA N6-adenosine threonylcarbamoyltransferase, mitochondrial (414 aa).

Residues M1–H29 constitute a mitochondrion transit peptide. 2 positions are modified to N6-acetyllysine: K74 and K140. A divalent metal cation-binding residues include H147 and H151. Substrate-binding positions include L169–G173 and D202. K203 carries the post-translational modification N6-acetyllysine. Substrate-binding residues include G222 and E226. K230 and K299 each carry N6-acetyllysine. Residues S329–N330 and T357 each bind substrate. D358 is an a divalent metal cation binding site.

This sequence belongs to the KAE1 / TsaD family. In terms of assembly, monomer. It depends on a divalent metal cation as a cofactor.

It localises to the mitochondrion. It carries out the reaction L-threonylcarbamoyladenylate + adenosine(37) in tRNA = N(6)-L-threonylcarbamoyladenosine(37) in tRNA + AMP + H(+). Functionally, required for the formation of a threonylcarbamoyl group on adenosine at position 37 (t(6)A37) in mitochondrial tRNAs that read codons beginning with adenine. Probably involved in the transfer of the threonylcarbamoyl moiety of threonylcarbamoyl-AMP (TC-AMP) to the N6 group of A37. Involved in mitochondrial genome maintenance. The protein is tRNA N6-adenosine threonylcarbamoyltransferase, mitochondrial of Mus musculus (Mouse).